Consider the following 77-residue polypeptide: Large ribosomal subunit protein bL28 (77 aa).

Positions methionine 1–alanine 21 are disordered.

The protein belongs to the bacterial ribosomal protein bL28 family.

The chain is Large ribosomal subunit protein bL28 from Chromobacterium violaceum (strain ATCC 12472 / DSM 30191 / JCM 1249 / CCUG 213 / NBRC 12614 / NCIMB 9131 / NCTC 9757 / MK).